The sequence spans 310 residues: Cytochrome f (310 aa).

A signal peptide spans 1-23; sequence MRRLIPILLGSLVLSLSILVAPA. The heme site is built by Tyr-28, Cys-48, Cys-51, and His-52. The chain crosses the membrane as a helical span at residues 277–297; it reads IYGLLAFFVAVSLAQILLVLK.

The protein belongs to the cytochrome f family. The 4 large subunits of the cytochrome b6-f complex are cytochrome b6, subunit IV (17 kDa polypeptide, PetD), cytochrome f and the Rieske protein, while the 4 small subunits are PetG, PetL, PetM and PetN. The complex functions as a dimer. Requires heme as cofactor.

The protein resides in the cellular thylakoid membrane. Functionally, component of the cytochrome b6-f complex, which mediates electron transfer between photosystem II (PSII) and photosystem I (PSI), cyclic electron flow around PSI, and state transitions. This chain is Cytochrome f, found in Prochlorococcus marinus (strain MIT 9303).